A 499-amino-acid polypeptide reads, in one-letter code: Glycerol kinase (499 aa).

Thr-13 contributes to the ADP binding site. Positions 13, 14, and 15 each coordinate ATP. Sn-glycerol 3-phosphate is bound at residue Thr-13. An ADP-binding site is contributed by Arg-17. Sn-glycerol 3-phosphate contacts are provided by Arg-83, Glu-84, Tyr-135, and Asp-245. Arg-83, Glu-84, Tyr-135, Asp-245, and Gln-246 together coordinate glycerol. ADP-binding residues include Thr-267 and Gly-310. Positions 267, 310, 314, and 411 each coordinate ATP. Residues Gly-411 and Asn-415 each coordinate ADP.

The protein belongs to the FGGY kinase family.

The enzyme catalyses glycerol + ATP = sn-glycerol 3-phosphate + ADP + H(+). The protein operates within polyol metabolism; glycerol degradation via glycerol kinase pathway; sn-glycerol 3-phosphate from glycerol: step 1/1. With respect to regulation, inhibited by fructose 1,6-bisphosphate (FBP). Functionally, key enzyme in the regulation of glycerol uptake and metabolism. Catalyzes the phosphorylation of glycerol to yield sn-glycerol 3-phosphate. This is Glycerol kinase from Xanthomonas campestris pv. campestris (strain ATCC 33913 / DSM 3586 / NCPPB 528 / LMG 568 / P 25).